The sequence spans 258 residues: Acetylglutamate kinase (258 aa).

Residues 44-45 (GG), R66, and N158 each bind substrate. Residues 181 to 186 (DVSGIL) and 209 to 211 (IIT) each bind ATP.

The protein belongs to the acetylglutamate kinase family. ArgB subfamily. As to quaternary structure, homodimer.

The protein localises to the cytoplasm. The catalysed reaction is N-acetyl-L-glutamate + ATP = N-acetyl-L-glutamyl 5-phosphate + ADP. Its pathway is amino-acid biosynthesis; L-arginine biosynthesis; N(2)-acetyl-L-ornithine from L-glutamate: step 2/4. In terms of biological role, catalyzes the ATP-dependent phosphorylation of N-acetyl-L-glutamate. The protein is Acetylglutamate kinase of Salmonella arizonae (strain ATCC BAA-731 / CDC346-86 / RSK2980).